A 205-amino-acid chain; its full sequence is tRNA (guanine-N(7)-)-methyltransferase (205 aa).

Residues E36, E61, D88, and D109 each contribute to the S-adenosyl-L-methionine site. D109 is an active-site residue. Residue K113 participates in substrate binding. The tract at residues 115–120 (RHEKRR) is interaction with RNA. Residues D145 and 183–186 (TGYE) each bind substrate.

It belongs to the class I-like SAM-binding methyltransferase superfamily. TrmB family.

The catalysed reaction is guanosine(46) in tRNA + S-adenosyl-L-methionine = N(7)-methylguanosine(46) in tRNA + S-adenosyl-L-homocysteine. It participates in tRNA modification; N(7)-methylguanine-tRNA biosynthesis. Its function is as follows. Catalyzes the formation of N(7)-methylguanine at position 46 (m7G46) in tRNA. The chain is tRNA (guanine-N(7)-)-methyltransferase from Mycoplasmopsis agalactiae (strain NCTC 10123 / CIP 59.7 / PG2) (Mycoplasma agalactiae).